The primary structure comprises 175 residues: Catabolic 3-dehydroquinase (175 aa).

Tyr23 acts as the Proton acceptor in catalysis. Residues Asn74, His80, and Asp87 each contribute to the substrate site. His100 functions as the Proton donor in the catalytic mechanism. Residues Ile101 to Ser102 and Arg111 each bind substrate.

This sequence belongs to the type-II 3-dehydroquinase family. In terms of assembly, homododecamer. Adopts a ring-like structure, composed of an arrangement of two hexameric rings stacked on top of one another.

It carries out the reaction 3-dehydroquinate = 3-dehydroshikimate + H2O. It functions in the pathway aromatic compound metabolism; 3,4-dihydroxybenzoate biosynthesis; 3,4-dihydroxybenzoate from 3-dehydroquinate: step 1/2. Functionally, is involved in the catabolism of quinate. Allows the utilization of quinate as carbon source via the beta-ketoadipate pathway. In Talaromyces marneffei (strain ATCC 18224 / CBS 334.59 / QM 7333) (Penicillium marneffei), this protein is Catabolic 3-dehydroquinase.